The chain runs to 309 residues: Protein phosphatase 1 regulatory subunit 42 (309 aa).

LRR repeat units lie at residues 29–50 (KITH…SLCK), 51–72 (NLSV…NYAT), 73–94 (NLTH…RSLK), 95–116 (KLEK…EGLG), 117–138 (ELRE…LFDP), 147–168 (SLCI…ELLE), and 169–190 (NLNQ…EFLL). The 39-residue stretch at 204-242 (NPVCLKPKYRDRLILVSKSLEFLDGKEIKNIERQFLMNW) folds into the LRRCT domain.

As to quaternary structure, interacts with PPP1CC isoform gamma-2; the interaction is direct. Interacts with actin, dynein, KIF5B, KIFC1 and tubulin. Associates with microtubules. Post-translationally, phosphorylated; in the testis.

It is found in the cytoplasm. It localises to the cytoskeleton. The protein localises to the microtubule organizing center. The protein resides in the centrosome. Functionally, regulates phosphatase activity of protein phosphatase 1 (PP1) complexes in the testis. The polypeptide is Protein phosphatase 1 regulatory subunit 42 (Homo sapiens (Human)).